The sequence spans 874 residues: Alanine--tRNA ligase (874 aa).

His562, His566, Cys665, and His669 together coordinate Zn(2+).

It belongs to the class-II aminoacyl-tRNA synthetase family. Zn(2+) serves as cofactor.

The protein resides in the cytoplasm. The enzyme catalyses tRNA(Ala) + L-alanine + ATP = L-alanyl-tRNA(Ala) + AMP + diphosphate. Functionally, catalyzes the attachment of alanine to tRNA(Ala) in a two-step reaction: alanine is first activated by ATP to form Ala-AMP and then transferred to the acceptor end of tRNA(Ala). Also edits incorrectly charged Ser-tRNA(Ala) and Gly-tRNA(Ala) via its editing domain. This chain is Alanine--tRNA ligase, found in Pseudomonas savastanoi pv. phaseolicola (strain 1448A / Race 6) (Pseudomonas syringae pv. phaseolicola (strain 1448A / Race 6)).